The following is a 161-amino-acid chain: RNA pyrophosphohydrolase (161 aa).

Residues 12-154 form the Nudix hydrolase domain; it reads PYRPGVGMMI…KRKLYQAVVK (143 aa). Positions 46 to 67 match the Nudix box motif; sequence GGIVPGETPSIAAMREMLEEIG.

This sequence belongs to the Nudix hydrolase family. RppH subfamily. A divalent metal cation serves as cofactor.

In terms of biological role, accelerates the degradation of transcripts by removing pyrophosphate from the 5'-end of triphosphorylated RNA, leading to a more labile monophosphorylated state that can stimulate subsequent ribonuclease cleavage. This Rickettsia peacockii (strain Rustic) protein is RNA pyrophosphohydrolase.